The primary structure comprises 440 residues: Cell division protein FtsA (440 aa).

This sequence belongs to the FtsA/MreB family. In terms of assembly, self-interacts. Interacts with FtsZ.

It localises to the cell membrane. Its function is as follows. Cell division protein that is involved in the assembly of the Z ring. May serve as a membrane anchor for the Z ring. The protein is Cell division protein FtsA of Enterococcus faecalis (strain ATCC 700802 / V583).